The primary structure comprises 439 residues: Xylose isomerase (439 aa).

Residues H101 and D104 contribute to the active site. 7 residues coordinate Mg(2+): E232, E268, H271, D296, D307, D309, and D339.

This sequence belongs to the xylose isomerase family. Homotetramer. The cofactor is Mg(2+).

The protein resides in the cytoplasm. It catalyses the reaction alpha-D-xylose = alpha-D-xylulofuranose. The chain is Xylose isomerase from Haemophilus influenzae (strain PittGG).